We begin with the raw amino-acid sequence, 210 residues long: dTTP/UTP pyrophosphatase (210 aa).

Residue Asp85 is the Proton acceptor of the active site.

Belongs to the Maf family. YhdE subfamily. A divalent metal cation serves as cofactor.

The protein resides in the cytoplasm. The enzyme catalyses dTTP + H2O = dTMP + diphosphate + H(+). It catalyses the reaction UTP + H2O = UMP + diphosphate + H(+). Its function is as follows. Nucleoside triphosphate pyrophosphatase that hydrolyzes dTTP and UTP. May have a dual role in cell division arrest and in preventing the incorporation of modified nucleotides into cellular nucleic acids. In Saccharophagus degradans (strain 2-40 / ATCC 43961 / DSM 17024), this protein is dTTP/UTP pyrophosphatase.